The chain runs to 980 residues: Valine--tRNA ligase (980 aa).

Residues 43 to 53 (PNVTGTLHMGH) carry the 'HIGH' region motif. Positions 586 to 590 (KMSKS) match the 'KMSKS' region motif. K589 lines the ATP pocket. The stretch at 914–980 (LVDMDAERMR…AGLREQRGKL (67 aa)) forms a coiled coil.

Belongs to the class-I aminoacyl-tRNA synthetase family. ValS type 1 subfamily. In terms of assembly, monomer.

The protein localises to the cytoplasm. The catalysed reaction is tRNA(Val) + L-valine + ATP = L-valyl-tRNA(Val) + AMP + diphosphate. Functionally, catalyzes the attachment of valine to tRNA(Val). As ValRS can inadvertently accommodate and process structurally similar amino acids such as threonine, to avoid such errors, it has a 'posttransfer' editing activity that hydrolyzes mischarged Thr-tRNA(Val) in a tRNA-dependent manner. The sequence is that of Valine--tRNA ligase from Xanthomonas oryzae pv. oryzae (strain PXO99A).